We begin with the raw amino-acid sequence, 231 residues long: 7-cyano-7-deazaguanine synthase (231 aa).

Residue Leu-8–Ala-18 coordinates ATP. Positions 189, 197, 200, and 203 each coordinate Zn(2+).

It belongs to the QueC family. It depends on Zn(2+) as a cofactor.

The enzyme catalyses 7-carboxy-7-deazaguanine + NH4(+) + ATP = 7-cyano-7-deazaguanine + ADP + phosphate + H2O + H(+). It participates in purine metabolism; 7-cyano-7-deazaguanine biosynthesis. Catalyzes the ATP-dependent conversion of 7-carboxy-7-deazaguanine (CDG) to 7-cyano-7-deazaguanine (preQ(0)). The sequence is that of 7-cyano-7-deazaguanine synthase from Synechococcus elongatus (strain ATCC 33912 / PCC 7942 / FACHB-805) (Anacystis nidulans R2).